The sequence spans 494 residues: Ceramide glucosyltransferase (494 aa).

Over 1–6 (MPLLMD) the chain is Lumenal. A helical transmembrane segment spans residues 7–27 (GLAYAGAIWSLIVFCVQAIGL). Topologically, residues 28–337 (YQLFRSYSRP…VRWLRVRKWT (310 aa)) are cytoplasmic. Residue Asp-95 is a short sequence motif, D1. Position 160 (Asp-160) is a short sequence motif, D2. Residue Asp-285 is a short sequence motif, D3. Asp-285 acts as the Proton acceptor in catalysis. The short motif at 326–330 (RRVRW) is the (Q/R)XXRW element. Residues 338-358 (VLLATLVEPGVESMVCCMAFA) form a helical membrane-spanning segment. The Lumenal portion of the chain corresponds to 359–380 (HALTTTPWCPNPADWPIPHTWT). The chain crosses the membrane as a helical span at residues 381–401 (ALWSIWLAAIAVWATLDYVVY). At 402 to 428 (HFLHSCRSIEKDADSPDFAQGNELMKR) the chain is on the cytoplasmic side. The helical transmembrane segment at 429 to 449 (PFGAWILAWIGREILALPIWT) threads the bilayer. The Lumenal segment spans residues 450 to 494 (RAVLLGTTVTWRGTKFKVRPDQSVVDIPNAGAKSNGIGSTNRKVR).

The protein belongs to the glycosyltransferase 2 family.

It is found in the golgi apparatus membrane. The catalysed reaction is an N-acylsphing-4-enine + UDP-alpha-D-glucose = a beta-D-glucosyl-(1&lt;-&gt;1')-N-acylsphing-4-enine + UDP + H(+). Its pathway is lipid metabolism; sphingolipid metabolism. Functionally, catalyzes the final step in the biosynthesis of the membrane lipid glucosylceramide (GluCer), the transfer of glucose to ceramide. Glucosylceramides play important roles in growth, differentiation and pathogenicity. In Pyricularia oryzae (strain 70-15 / ATCC MYA-4617 / FGSC 8958) (Rice blast fungus), this protein is Ceramide glucosyltransferase.